Here is a 428-residue protein sequence, read N- to C-terminus: Histidine--tRNA ligase (428 aa).

The protein belongs to the class-II aminoacyl-tRNA synthetase family. As to quaternary structure, homodimer.

It is found in the cytoplasm. The enzyme catalyses tRNA(His) + L-histidine + ATP = L-histidyl-tRNA(His) + AMP + diphosphate + H(+). This is Histidine--tRNA ligase from Azotobacter vinelandii (strain DJ / ATCC BAA-1303).